We begin with the raw amino-acid sequence, 138 residues long: Protein FAM136A (138 aa).

N-acetylalanine is present on Ala-2. Phosphothreonine is present on residues Thr-124 and Thr-126.

This sequence belongs to the FAM136 family.

In Bos taurus (Bovine), this protein is Protein FAM136A (FAM136A).